A 274-amino-acid chain; its full sequence is NH(3)-dependent NAD(+) synthetase (274 aa).

Position 46–53 (46–53 (GISGGQDS)) interacts with ATP. D52 is a binding site for Mg(2+). R140 contributes to the deamido-NAD(+) binding site. Position 160 (T160) interacts with ATP. E165 is a Mg(2+) binding site. Residues K173 and D180 each coordinate deamido-NAD(+). Residues K189 and T211 each contribute to the ATP site. 260–261 (HK) lines the deamido-NAD(+) pocket.

This sequence belongs to the NAD synthetase family. Homodimer.

It catalyses the reaction deamido-NAD(+) + NH4(+) + ATP = AMP + diphosphate + NAD(+) + H(+). Its pathway is cofactor biosynthesis; NAD(+) biosynthesis; NAD(+) from deamido-NAD(+) (ammonia route): step 1/1. In terms of biological role, catalyzes the ATP-dependent amidation of deamido-NAD to form NAD. Uses ammonia as a nitrogen source. The protein is NH(3)-dependent NAD(+) synthetase of Rhodococcus erythropolis (strain PR4 / NBRC 100887).